The sequence spans 446 residues: Tubulin beta chain (446 aa).

Residues Gln11, Glu69, Ser138, Gly142, Thr143, Gly144, Asn204, and Asn226 each contribute to the GTP site. Residue Glu69 coordinates Mg(2+). The tract at residues 423-446 (QQYQDATADEEEGEYEEEPAEEEQ) is disordered. The span at 429-446 (TADEEEGEYEEEPAEEEQ) shows a compositional bias: acidic residues.

The protein belongs to the tubulin family. In terms of assembly, dimer of alpha and beta chains. A typical microtubule is a hollow water-filled tube with an outer diameter of 25 nm and an inner diameter of 15 nM. Alpha-beta heterodimers associate head-to-tail to form protofilaments running lengthwise along the microtubule wall with the beta-tubulin subunit facing the microtubule plus end conferring a structural polarity. Microtubules usually have 13 protofilaments but different protofilament numbers can be found in some organisms and specialized cells. Requires Mg(2+) as cofactor.

The protein resides in the cytoplasm. It localises to the cytoskeleton. In terms of biological role, tubulin is the major constituent of microtubules, a cylinder consisting of laterally associated linear protofilaments composed of alpha- and beta-tubulin heterodimers. Microtubules grow by the addition of GTP-tubulin dimers to the microtubule end, where a stabilizing cap forms. Below the cap, tubulin dimers are in GDP-bound state, owing to GTPase activity of alpha-tubulin. In Pleurotus sajor-caju (Oyster mushroom), this protein is Tubulin beta chain.